We begin with the raw amino-acid sequence, 610 residues long: Methionine--tRNA ligase (610 aa).

Positions 12–22 (PYANGPRHIGH) match the 'HIGH' region motif. Positions 144, 147, 157, and 160 each coordinate Zn(2+). Residues 348-352 (KFSSS) carry the 'KMSKS' region motif. Ser-351 is an ATP binding site.

It belongs to the class-I aminoacyl-tRNA synthetase family. MetG type 1 subfamily. In terms of assembly, monomer. Zn(2+) serves as cofactor.

It localises to the cytoplasm. The catalysed reaction is tRNA(Met) + L-methionine + ATP = L-methionyl-tRNA(Met) + AMP + diphosphate. In terms of biological role, is required not only for elongation of protein synthesis but also for the initiation of all mRNA translation through initiator tRNA(fMet) aminoacylation. This is Methionine--tRNA ligase from Corynebacterium glutamicum (strain R).